Reading from the N-terminus, the 207-residue chain is Na(+)-translocating ferredoxin:NAD(+) oxidoreductase complex subunit G (207 aa).

The helical transmembrane segment at 18-38 threads the bilayer; the sequence is GLILFVISAVAACALALTNYV. The residue at position 185 (Thr-185) is an FMN phosphoryl threonine.

Belongs to the RnfG family. In terms of assembly, the complex is composed of six subunits: RnfA, RnfB, RnfC, RnfD, RnfE and RnfG. It depends on FMN as a cofactor.

It localises to the cell membrane. It carries out the reaction 2 reduced [2Fe-2S]-[ferredoxin] + Na(+)(in) + NAD(+) + H(+) = 2 oxidized [2Fe-2S]-[ferredoxin] + Na(+)(out) + NADH. Functionally, part of a membrane-bound complex that couples electron transfer with translocation of ions across the membrane. Couples electron transfer from reduced ferredoxin to NAD(+) with electrogenic movement of Na(+) out of the cell. Involved in caffeate respiration. This is Na(+)-translocating ferredoxin:NAD(+) oxidoreductase complex subunit G from Acetobacterium woodii (strain ATCC 29683 / DSM 1030 / JCM 2381 / KCTC 1655 / WB1).